Reading from the N-terminus, the 563-residue chain is Methylcrotonoyl-CoA carboxylase beta chain, mitochondrial (563 aa).

Residues 1-22 (MWGALRSVLRPCSRASVPRQRA) constitute a mitochondrion transit peptide. A CoA carboxyltransferase N-terminal domain is found at 49–306 (MKALVNQLHE…QKKLDVTVEP (258 aa)). Residues 49–555 (MKALVNQLHE…SAALNAPIQR (507 aa)) are carboxyltransferase. Lys70 carries the post-translational modification N6-acetyllysine; alternate. Position 70 is an N6-succinyllysine; alternate (Lys70). Position 141 is an N6-succinyllysine (Lys141). Residues 309–555 (EPLFPADELY…SAALNAPIQR (247 aa)) enclose the CoA carboxyltransferase C-terminal domain. The segment at 343 to 372 (RFNEFKALYGDTLVTGFARIFGYPVGIIGN) is acyl-CoA binding. Position 433 is an N6-succinyllysine (Lys433). Lys495 carries the N6-acetyllysine; alternate modification. Lys495 carries the post-translational modification N6-succinyllysine; alternate. Lys511 carries the N6-acetyllysine modification.

Belongs to the AccD/PCCB family. Probably a dodecamer composed of six biotin-containing alpha subunits (MCCC1) and six beta (MCCC2) subunits.

Its subcellular location is the mitochondrion matrix. It catalyses the reaction 3-methylbut-2-enoyl-CoA + hydrogencarbonate + ATP = 3-methyl-(2E)-glutaconyl-CoA + ADP + phosphate + H(+). The protein operates within amino-acid degradation; L-leucine degradation; (S)-3-hydroxy-3-methylglutaryl-CoA from 3-isovaleryl-CoA: step 2/3. Its function is as follows. Carboxyltransferase subunit of the 3-methylcrotonyl-CoA carboxylase, an enzyme that catalyzes the conversion of 3-methylcrotonyl-CoA to 3-methylglutaconyl-CoA, a critical step for leucine and isovaleric acid catabolism. In Rattus norvegicus (Rat), this protein is Methylcrotonoyl-CoA carboxylase beta chain, mitochondrial (Mccc2).